Consider the following 267-residue polypeptide: NAD kinase 2 (267 aa).

Aspartate 52 functions as the Proton acceptor in the catalytic mechanism. Residues 52–53 (DA), 124–125 (NE), arginine 151, aspartate 153, 164–169 (TAYNKS), and alanine 188 each bind NAD(+).

The protein belongs to the NAD kinase family. It depends on a divalent metal cation as a cofactor.

The protein resides in the cytoplasm. The enzyme catalyses NAD(+) + ATP = ADP + NADP(+) + H(+). Functionally, involved in the regulation of the intracellular balance of NAD and NADP, and is a key enzyme in the biosynthesis of NADP. Catalyzes specifically the phosphorylation on 2'-hydroxyl of the adenosine moiety of NAD to yield NADP. The polypeptide is NAD kinase 2 (Bacillus cereus (strain ATCC 14579 / DSM 31 / CCUG 7414 / JCM 2152 / NBRC 15305 / NCIMB 9373 / NCTC 2599 / NRRL B-3711)).